Here is a 323-residue protein sequence, read N- to C-terminus: tRNA U34 carboxymethyltransferase (323 aa).

Carboxy-S-adenosyl-L-methionine contacts are provided by residues lysine 91, tryptophan 105, lysine 110, glycine 130, 152–154 (DPT), 181–182 (IE), methionine 196, tyrosine 200, and arginine 315.

This sequence belongs to the class I-like SAM-binding methyltransferase superfamily. CmoB family. Homotetramer.

It carries out the reaction carboxy-S-adenosyl-L-methionine + 5-hydroxyuridine(34) in tRNA = 5-carboxymethoxyuridine(34) in tRNA + S-adenosyl-L-homocysteine + H(+). In terms of biological role, catalyzes carboxymethyl transfer from carboxy-S-adenosyl-L-methionine (Cx-SAM) to 5-hydroxyuridine (ho5U) to form 5-carboxymethoxyuridine (cmo5U) at position 34 in tRNAs. The polypeptide is tRNA U34 carboxymethyltransferase (Shigella flexneri serotype 5b (strain 8401)).